We begin with the raw amino-acid sequence, 579 residues long: Basic helix-loop-helix ARNT-like protein 2 (579 aa).

The interval 1 to 198 (MEFPRKRRGR…SPREKPIDTK (198 aa)) is interaction with PER2. The Nuclear localization signal motif lies at 4-9 (PRKRRG). The interval 40 to 61 (RTGVSAPSGIREAHSQMEKRRR) is disordered. Positions 48–101 (GIREAHSQMEKRRRDKMNHLIQKLSSMIPPHIPTAHKLDKLSVLRRAVQYLRSL) constitute a bHLH domain. Residues 50-59 (REAHSQMEKR) show a composition bias toward basic and acidic residues. The Nuclear export signal 1 signature appears at 118-128 (IQDKELSHLIL). The 72-residue stretch at 119–190 (QDKELSHLIL…KEQLSCDGSP (72 aa)) folds into the PAS 1 domain. The segment covering 186 to 196 (CDGSPREKPID) has biased composition (basic and acidic residues). The disordered stretch occupies residues 186–213 (CDGSPREKPIDTKTSQVYSHPYTGRPRM). A Glycyl lysine isopeptide (Lys-Gly) (interchain with G-Cter in SUMO2 and SUMO3) cross-link involves residue Lys-226. Residue Lys-233 forms a Glycyl lysine isopeptide (Lys-Gly) (interchain with G-Cter in SUMO2) linkage. In terms of domain architecture, PAS 2 spans 296 to 366 (VPQKSGKINV…DKHKAVLQSK (71 aa)). The short motif at 331 to 339 (LGYLPQELL) is the Nuclear export signal 2 element. The PAC domain maps to 371 to 414 (TDSYKFRVKDGAFVTLKSEWFSFTNPWTKELEYIVSVNTLVLGR). The disordered stretch occupies residues 469–536 (RLHSSSPEDA…AHPHGPLPGD (68 aa)).

In terms of assembly, component of the circadian core oscillator, which includes the CRY proteins, CLOCK, or NPAS2, BMAL1 or BMAL2, CSNK1D and/or CSNK1E, TIMELESS and the PER proteins. Interacts directly with CLOCK to form the BMAL2-CLOCK transactivator. Can form heterodimers or homodimers which interact directly with CLOCK to form the transcription activator. Interacts with NPAS2 and HIF1A. Interacts with PER2. Expressed in the suprachiasmatic nucleus (SCN).

It localises to the nucleus. Transcriptional activator which forms a core component of the circadian clock. The circadian clock, an internal time-keeping system, regulates various physiological processes through the generation of approximately 24 hour circadian rhythms in gene expression, which are translated into rhythms in metabolism and behavior. It is derived from the Latin roots 'circa' (about) and 'diem' (day) and acts as an important regulator of a wide array of physiological functions including metabolism, sleep, body temperature, blood pressure, endocrine, immune, cardiovascular, and renal function. Consists of two major components: the central clock, residing in the suprachiasmatic nucleus (SCN) of the brain, and the peripheral clocks that are present in nearly every tissue and organ system. Both the central and peripheral clocks can be reset by environmental cues, also known as Zeitgebers (German for 'timegivers'). The predominant Zeitgeber for the central clock is light, which is sensed by retina and signals directly to the SCN. The central clock entrains the peripheral clocks through neuronal and hormonal signals, body temperature and feeding-related cues, aligning all clocks with the external light/dark cycle. Circadian rhythms allow an organism to achieve temporal homeostasis with its environment at the molecular level by regulating gene expression to create a peak of protein expression once every 24 hours to control when a particular physiological process is most active with respect to the solar day. Transcription and translation of core clock components (CLOCK, NPAS2, BMAL1, BMAL2, PER1, PER2, PER3, CRY1 and CRY2) plays a critical role in rhythm generation, whereas delays imposed by post-translational modifications (PTMs) are important for determining the period (tau) of the rhythms (tau refers to the period of a rhythm and is the length, in time, of one complete cycle). A diurnal rhythm is synchronized with the day/night cycle, while the ultradian and infradian rhythms have a period shorter and longer than 24 hours, respectively. Disruptions in the circadian rhythms contribute to the pathology of cardiovascular diseases, cancer, metabolic syndromes and aging. A transcription/translation feedback loop (TTFL) forms the core of the molecular circadian clock mechanism. Transcription factors, CLOCK or NPAS2 and BMAL1 or BMAL2, form the positive limb of the feedback loop, act in the form of a heterodimer and activate the transcription of core clock genes and clock-controlled genes (involved in key metabolic processes), harboring E-box elements (5'-CACGTG-3') within their promoters. The core clock genes: PER1/2/3 and CRY1/2 which are transcriptional repressors form the negative limb of the feedback loop and interact with the CLOCK|NPAS2-BMAL1|BMAL2 heterodimer inhibiting its activity and thereby negatively regulating their own expression. This heterodimer also activates nuclear receptors NR1D1/2 and RORA/B/G, which form a second feedback loop and which activate and repress BMAL1 transcription, respectively. The CLOCK-BMAL2 heterodimer activates the transcription of SERPINE1/PAI1 and BHLHE40/DEC1. This Mus musculus (Mouse) protein is Basic helix-loop-helix ARNT-like protein 2 (Bmal2).